Reading from the N-terminus, the 234-residue chain is Sugar fermentation stimulation protein homolog (234 aa).

This sequence belongs to the SfsA family.

This Citrobacter koseri (strain ATCC BAA-895 / CDC 4225-83 / SGSC4696) protein is Sugar fermentation stimulation protein homolog.